Reading from the N-terminus, the 905-residue chain is Protein translocase subunit SecA (905 aa).

Residues Gln87, Gly105–Thr109, and Asp512 each bind ATP. Residues Ala840–Ala905 are disordered. Residues Gln843 to Ser852 show a composition bias toward low complexity. The span at Glu853–Ala862 shows a compositional bias: basic and acidic residues. Over residues Glu863–Gln874 the composition is skewed to polar residues. Residues Cys886, Cys888, Cys897, and His898 each coordinate Zn(2+). A compositionally biased stretch (basic residues) spans Lys892–Ala905.

It belongs to the SecA family. As to quaternary structure, monomer and homodimer. Part of the essential Sec protein translocation apparatus which comprises SecA, SecYEG and auxiliary proteins SecDF-YajC and YidC. Requires Zn(2+) as cofactor.

Its subcellular location is the cell inner membrane. It is found in the cytoplasm. It carries out the reaction ATP + H2O + cellular proteinSide 1 = ADP + phosphate + cellular proteinSide 2.. Functionally, part of the Sec protein translocase complex. Interacts with the SecYEG preprotein conducting channel. Has a central role in coupling the hydrolysis of ATP to the transfer of proteins into and across the cell membrane, serving both as a receptor for the preprotein-SecB complex and as an ATP-driven molecular motor driving the stepwise translocation of polypeptide chains across the membrane. The polypeptide is Protein translocase subunit SecA (Actinobacillus pleuropneumoniae serotype 3 (strain JL03)).